A 451-amino-acid polypeptide reads, in one-letter code: Pre-mRNA-splicing factor PRP46 (451 aa).

7 WD repeats span residues 137-168 (GHLGWVRCVAIDPVDNEWFITGSNDTTMKVWD), 180-210 (GHVMTVRDVAVSDRHPYLFSVSEDKTVKCWD), 222-252 (GHLSGVRTVSIHPTLDLIATAGRDSVIKLWD), 264-294 (GHKGPINQVQCTPVDPQVVSSSTDATVRLWD), 306-335 (HHKRSVRATALHPKEFSVASACTDDIRSWG), 348-377 (EKTGIINTLSINQDDVLFAGGDNGVLSFYD), and 397-427 (EGERSVLCSTFDKTGLRLITGEADKSIKIWK).

It belongs to the WD repeat PRL1/PRL2 family. Belongs to the CWC complex (or CEF1-associated complex), a spliceosome subcomplex composed of the U2, U5 and U6 snRNAs and at least BUD13, BUD31, BRR2, CDC40, CEF1, CLF1, CUS1, CWC2, CWC15, CWC21, CWC22, CWC23, CWC24, CWC25, CWC27, ECM2, HSH155, IST3, ISY1, LEA1, MSL1, NTC20, PRP8, PRP9, PRP11, PRP19, PRP21, PRP22, PRP45, PRP46, SLU7, SMB1, SMD1, SMD2, SMD3, SMX2, SMX3, SNT309, SNU114, SPP2, SYF1, SYF2, RSE1 and YJU2. Interacts with CEF1, CLF1, NTC20, PRP45 and SYF1.

Its subcellular location is the cytoplasm. The protein resides in the nucleus. Its function is as follows. Involved in pre-mRNA splicing. May also be required for cell cycle progression at G2/M. This Saccharomyces cerevisiae (strain ATCC 204508 / S288c) (Baker's yeast) protein is Pre-mRNA-splicing factor PRP46 (PRP46).